We begin with the raw amino-acid sequence, 233 residues long: Bcl-2-like protein 1 (233 aa).

Positions 4–24 (SNRELVVDFLSYKLSQKGYSW) match the BH4 motif. The segment at 29-71 (DVEENRTEAPEGTESEAETPSAINGNPSWHLADSPAVNGATGH) is disordered. Ser49 carries the phosphoserine; by PLK3 modification. Ser62 carries the phosphoserine; by CDK1 modification. The short motif at 86–100 (VKQALREAGDEFELR) is the BH3 element. The short motif at 129-148 (ELFRDGVNWGRIVAFFSFGG) is the BH1 element. Positions 180 to 195 (PWIQENGGWDTFVELY) match the BH2 motif. The chain crosses the membrane as a helical span at residues 210–226 (FNRWFLTGMTLAGVVLL).

The protein belongs to the Bcl-2 family. Homodimer. Heterodimers with BAX, BAK or BCL2. Heterodimerization with BAX does not seem to be required for anti-apoptotic activity. Interacts with BCL2L11. Interacts with BAD. Interacts with SIVA1 isoform 1; the interaction inhibits the anti-apoptotic activity. Interacts with BECN1 and PGAM5. Interacts with IKZF3. Interacts with HEBP2. Interacts with BOP. Interacts with p53/TP53 and BBC3; interaction with BBC3 disrupts the interaction with p53/TP53. Interacts with DNM1L and CLTA; DNM1L and BCL2L1 may form a complex in synaptic vesicles that also contains clathrin and MFF. Interacts with ATP5F1A and ATP5F1B; the interactions mediate the association of BCL2L1 with the mitochondrial membrane ATP synthase F(1)F(0) ATP synthase. Interacts with VDAC1. Interacts (via the loop between motifs BH4 and BH3) with NLRP1 (via LRR repeats), but not with NLRP2, NLRP3, NLRP4, PYCARD, nor MEFV. Interacts with BCL2L11 (via BH3). Interacts with RNF183. Interacts with GIMAP3/IAN4. Interacts with GIMAP5 and HSPA8/HSC70; the interaction between HSPA8 and BCL2L1 is impaired in the absence of GIMAP5. Interacts with CLU (isoform 4); this interaction releases and activates BAX and promotes cell death. In terms of processing, proteolytically cleaved by caspases during apoptosis. The cleaved protein, lacking the BH4 motif, has pro-apoptotic activity. Phosphorylated on Ser-62 by CDK1. This phosphorylation is partial in normal mitotic cells, but complete in G2-arrested cells upon DNA-damage, thus promoting subsequent apoptosis probably by triggering caspases-mediated proteolysis. Phosphorylated by PLK3, leading to regulate the G2 checkpoint and progression to cytokinesis during mitosis. Phosphorylation at Ser-49 appears during the S phase and G2, disappears rapidly in early mitosis during prometaphase, metaphase and early anaphase, and re-appears during telophase and cytokinesis. Post-translationally, ubiquitinated by RNF183 during prolonged ER stress, leading to degradation by the proteosome.

The protein localises to the mitochondrion membrane. It localises to the nucleus membrane. Its subcellular location is the mitochondrion matrix. It is found in the cytoplasm. The protein resides in the cytoskeleton. The protein localises to the microtubule organizing center. It localises to the centrosome. Its subcellular location is the cytosol. It is found in the cytoplasmic vesicle. The protein resides in the secretory vesicle. The protein localises to the synaptic vesicle membrane. Its function is as follows. Potent inhibitor of cell death. Inhibits activation of caspases. Appears to regulate cell death by blocking the voltage-dependent anion channel (VDAC) by binding to it and preventing the release of the caspase activator, CYC1, from the mitochondrial membrane. Also acts as a regulator of G2 checkpoint and progression to cytokinesis during mitosis. Regulates presynaptic plasticity, including neurotransmitter release and recovery, number of axonal mitochondria as well as size and number of synaptic vesicle clusters. During synaptic stimulation, increases ATP availability from mitochondria through regulation of mitochondrial membrane ATP synthase F(1)F(0) activity and regulates endocytic vesicle retrieval in hippocampal neurons through association with DMN1L and stimulation of its GTPase activity in synaptic vesicles. May attenuate inflammation impairing NLRP1-inflammasome activation, hence CASP1 activation and IL1B release. This is Bcl-2-like protein 1 (BCL2L1) from Sus scrofa (Pig).